The following is an 899-amino-acid chain: MANEHSPLLVHGVYSMMGNAEDSRGGSAGTGEASNPKTDPRKLNTFFGVMVPTILSMFSIVLFLRTGFVVGHAGLLHGLLMLFVAYFIISLTILSICAISTNGAVEGGGAYFMISRSLGPEFGGSIGLMFYLAKVCACGVYVLGLVEAIMDVFGQDPGSSVAQGLRVLPQGYWYTVLYSSVVLLLCMLVCLVGAHIYAKASFLILLVVTVSLISIIISPLIVSPQGFNITHTYGNNHSVTVSPSYTGFNSTTLKNNLGPRYSLDYSTNTMMSFATVFAVMFTSCTGIMAGANMSGELKNPSESIPKGTIMAVAYTFTVYVLLYLLLSSTCDRSLLLNDYAVFQRVNVWPPFVTIGVYCASLSAAMCSMIGASRILHALALDQLFGLPLAPAAVTSSSGNPWVSVLYTWALVQCTLFAGQLNVIAGIVTVFYLLAYAAVDLACLALEWASAPNFRPTFQFFSWHTCLLGIISCVVMMFVINPVYSSASIVLLLLLLLFLHYRSPTSSWGYISQALIFHQVRKYLLMLDSRKDHVKFWRPQVLLMVSNPRSSCQLICFVNQLKKGGLFVLGHVQIGDLDVLPADPVQPQYNFWLSLVDKLGVKAFVDLTLSPSVRQGTQHLLRITGLGGMKPNTLVLGFYDNSYPEDYFLQDPVFCKGDRSEGDNFGVDLPSLQAHFPPVRHAESPRALQPQEYVSIIQDAIKMGKNICLARYFFQLPPESKGATYMWGKDSMDTIDVWPTNLLTPGSASYADVGSLFLLQMACVLNMASGWRRARLRIFVCVESESEDQGWLAKEEQFRELLGKLRIRAAIKIVAWDNVARMVRGPNTESQPVSEDFLCAVNGLLKEHSSTAAVRFLYLPDPPSSCELSQQYLTQLDTLTRDLGPTLLIHGVTPVTCTEL.

Over 1–42 the chain is Cytoplasmic; sequence MANEHSPLLVHGVYSMMGNAEDSRGGSAGTGEASNPKTDPRK. The helical transmembrane segment at 43–63 threads the bilayer; the sequence is LNTFFGVMVPTILSMFSIVLF. The Extracellular segment spans residues 64-78; that stretch reads LRTGFVVGHAGLLHG. Residues 79–99 form a helical membrane-spanning segment; sequence LLMLFVAYFIISLTILSICAI. At 100 to 125 the chain is on the cytoplasmic side; sequence STNGAVEGGGAYFMISRSLGPEFGGS. Residues 126–146 form a helical membrane-spanning segment; that stretch reads IGLMFYLAKVCACGVYVLGLV. Residues 147–175 lie on the Extracellular side of the membrane; it reads EAIMDVFGQDPGSSVAQGLRVLPQGYWYT. The helical transmembrane segment at 176-196 threads the bilayer; sequence VLYSSVVLLLCMLVCLVGAHI. Over 197-201 the chain is Cytoplasmic; the sequence is YAKAS. The chain crosses the membrane as a helical span at residues 202–222; it reads FLILLVVTVSLISIIISPLIV. Over 223 to 269 the chain is Extracellular; sequence SPQGFNITHTYGNNHSVTVSPSYTGFNSTTLKNNLGPRYSLDYSTNT. 3 N-linked (GlcNAc...) asparagine glycosylation sites follow: Asn-228, Asn-236, and Asn-249. The helical transmembrane segment at 270-290 threads the bilayer; sequence MMSFATVFAVMFTSCTGIMAG. Residues 291-306 lie on the Cytoplasmic side of the membrane; sequence ANMSGELKNPSESIPK. The helical transmembrane segment at 307 to 327 threads the bilayer; it reads GTIMAVAYTFTVYVLLYLLLS. The Extracellular portion of the chain corresponds to 328-350; it reads STCDRSLLLNDYAVFQRVNVWPP. Residues 351–371 form a helical membrane-spanning segment; that stretch reads FVTIGVYCASLSAAMCSMIGA. Topologically, residues 372–373 are cytoplasmic; the sequence is SR. The helical transmembrane segment at 374–394 threads the bilayer; that stretch reads ILHALALDQLFGLPLAPAAVT. Residues 395–399 lie on the Extracellular side of the membrane; that stretch reads SSSGN. The chain crosses the membrane as a helical span at residues 400–420; that stretch reads PWVSVLYTWALVQCTLFAGQL. Asn-421 is a topological domain (cytoplasmic). Residues 422–442 form a helical membrane-spanning segment; that stretch reads VIAGIVTVFYLLAYAAVDLAC. The Extracellular portion of the chain corresponds to 443 to 455; it reads LALEWASAPNFRP. The chain crosses the membrane as a helical span at residues 456–476; it reads TFQFFSWHTCLLGIISCVVMM. Over 477–487 the chain is Extracellular; that stretch reads FVINPVYSSAS. A helical membrane pass occupies residues 488–510; the sequence is IVLLLLLLLFLHYRSPTSSWGYI. Topologically, residues 511-563 are cytoplasmic; sequence SQALIFHQVRKYLLMLDSRKDHVKFWRPQVLLMVSNPRSSCQLICFVNQLKKG. A helical membrane pass occupies residues 564–584; it reads GLFVLGHVQIGDLDVLPADPV. The Extracellular portion of the chain corresponds to 585 to 749; the sequence is QPQYNFWLSL…NLLTPGSASY (165 aa). A helical transmembrane segment spans residues 750-770; that stretch reads ADVGSLFLLQMACVLNMASGW. Over 771–899 the chain is Cytoplasmic; the sequence is RRARLRIFVC…GVTPVTCTEL (129 aa).

Belongs to the SLC12A transporter family.

The protein localises to the cell membrane. The protein resides in the lysosome membrane. In terms of biological role, seems to correspond to a subunit of a multimeric transport system and thus, additional subunits may be required for its function. May play a role in lysosomal ion flux and osmoregulation. This Danio rerio (Zebrafish) protein is Solute carrier family 12 member 9 (slc12a9).